The following is a 308-amino-acid chain: uncharacterized protein (308 aa).

This is an uncharacterized protein from Ictalurid herpesvirus 1 (strain Auburn) (IcHV-1).